A 146-amino-acid polypeptide reads, in one-letter code: Sordarin/hypoxysordarin biosynthesis cluster protein G (146 aa).

The protein operates within antibiotic biosynthesis. Functionally, part of the gene cluster that mediates the biosynthesis of sordarin and hypoxysordarin, glycoside antibiotics with a unique tetracyclic diterpene aglycone structure. First, the geranylgeranyl diphosphate synthase sdnC constructs GGDP from farnesyl diphosphate and isopentenyl diphosphate. The diterpene cyclase sdnA then catalyzes the cyclization of GGDP to afford cycloaraneosene. Cycloaraneosene is then hydroxylated four times by the putative cytochrome P450 monooxygenases sdnB, sdnE, sdnF and sdnH to give a hydroxylated cycloaraneosene derivative such as cycloaraneosene-8,9,13,19-tetraol. Although the order of the hydroxylations is unclear, at least C8, C9 and C13 of the cycloaraneosene skeleton are hydroxylated before the sordaricin formation. Dehydration of the 13-hydroxy group of the hydroxylated cycloaraneosene derivative might be catalyzed by an unassigned hypothetical protein such as sdnG and sdnP to construct the cyclopentadiene moiety. The FAD-dependent oxidoreductase sdnN is proposed to catalyze the oxidation at C9 of the hydroxylated cycloaraneosene derivative and also catalyze the Baeyer-Villiger oxidation to give the lactone intermediate. The presumed lactone intermediate would be hydrolyzed to give an acrolein moiety and a carboxylate moiety. Then, [4+2]cycloaddition would occur between the acrolein moiety and the cyclopentadiene moiety to give sordaricin. SdnN might also be involved in the [4+2]cycloaddition after the hypothesized oxidation to accommodate the oxidized product and prompt the [4+2]cycloaddition. GDP-6-deoxy-D-altrose may be biosynthesized from GDP-D-mannose by the putative GDP-mannose-4,6-dehydratase sdnI and the short-chain dehydrogenase sdnK. The glycosyltransferase sdnJ catalyzes the attachment of 6-deoxy-D-altrose onto the 19-hydroxy group of sordaricin to give 4'-O-demethylsordarin. The methyltransferase sdnD would complete the biosynthesis of sordarin. Sordarin can be further modified into hypoxysordarin. The unique acyl chain at the 3'-hydroxy group of hypoxysordarin would be constructed by an iterative type I PKS sdnO and the trans-acting polyketide methyltransferase sdnL. SdnL would be responsible for the introduction of an alpha-methyl group of the polyketide chain. Alternatively, the beta-lactamase-like protein sdnR might be responsible for the cleavage and transfer of the polyketide chain from the PKS sdnO to sordarin. Two putative cytochrome P450 monooxygenases, sdnQ and sdnT, might catalyze the epoxidations of the polyketide chain to complete the biosynthesis of hypoxysordarin. Transcriptional regulators sdnM and sdnS are presumably encoded for the transcriptional regulation of the expression of the sdn gene cluster. This Sordaria araneosa (Pleurage araneosa) protein is Sordarin/hypoxysordarin biosynthesis cluster protein G.